The sequence spans 577 residues: Arginine--tRNA ligase (577 aa).

The short motif at 122–132 is the 'HIGH' region element; the sequence is PNVAKEMHVGH.

The protein belongs to the class-I aminoacyl-tRNA synthetase family. In terms of assembly, monomer.

It localises to the cytoplasm. It carries out the reaction tRNA(Arg) + L-arginine + ATP = L-arginyl-tRNA(Arg) + AMP + diphosphate. The protein is Arginine--tRNA ligase of Escherichia coli O6:K15:H31 (strain 536 / UPEC).